The chain runs to 621 residues: Probable potassium transport system protein Kup 2 (621 aa).

A run of 12 helical transmembrane segments spans residues 9-29 (MAGLTLAALGVVYGDIGTSPL), 48-68 (IFGILSLIFWSLIFVVSVKYV), 101-121 (IVLLGLFGAALFYGDAIITPA), 136-156 (SGMEAYVLPMAVGVLVGLFLL), 164-184 (VGLMFGPVMMVWFAILGILGL), 210-230 (GFHAFLTLGSVVLALTGAEAL), 246-266 (WFSLVLPGLGLNYFGQGALLM), 275-295 (PFFLLAPDWALLPMIALATLA), 336-356 (IYMPFINWALLVAVLVVVLTF), 364-384 (AAYGIAVTGTMLITTMLFFVV), 393-413 (LPLALGITLLFGVIDTAFFAA), and 418-438 (VADGGWLPLVMGMAIFTLMST).

Belongs to the HAK/KUP transporter (TC 2.A.72) family.

It is found in the cell inner membrane. The enzyme catalyses K(+)(in) + H(+)(in) = K(+)(out) + H(+)(out). Transport of potassium into the cell. Likely operates as a K(+):H(+) symporter. The polypeptide is Probable potassium transport system protein Kup 2 (Chromobacterium violaceum (strain ATCC 12472 / DSM 30191 / JCM 1249 / CCUG 213 / NBRC 12614 / NCIMB 9131 / NCTC 9757 / MK)).